The primary structure comprises 174 residues: Shikimate kinase 2 (174 aa).

12–17 is a binding site for ATP; the sequence is GCGKTT. The Mg(2+) site is built by threonine 16 and aspartate 32. 3 residues coordinate substrate: aspartate 34, arginine 58, and glycine 79. Residues 112–126 form an LID domain region; that stretch reads QAAPEEDLRPTLTGK. Arginine 120 provides a ligand contact to ATP. A substrate-binding site is contributed by arginine 139.

The protein belongs to the shikimate kinase family. AroL subfamily. As to quaternary structure, monomer. Mg(2+) serves as cofactor.

The protein localises to the cytoplasm. It catalyses the reaction shikimate + ATP = 3-phosphoshikimate + ADP + H(+). It participates in metabolic intermediate biosynthesis; chorismate biosynthesis; chorismate from D-erythrose 4-phosphate and phosphoenolpyruvate: step 5/7. Catalyzes the specific phosphorylation of the 3-hydroxyl group of shikimic acid using ATP as a cosubstrate. This Escherichia coli O1:K1 / APEC protein is Shikimate kinase 2.